The sequence spans 192 residues: Putative ripening-related protein 2 (192 aa).

An N-terminal signal peptide occupies residues 1-26; it reads MATTNCLLALAIAGLVLVSLPGLSRG.

The protein belongs to the kiwellin family.

It is found in the secreted. The chain is Putative ripening-related protein 2 from Oryza sativa subsp. japonica (Rice).